A 178-amino-acid chain; its full sequence is UPF0228 protein MM_0401 (178 aa).

The protein belongs to the UPF0228 family.

This is UPF0228 protein MM_0401 from Methanosarcina mazei (strain ATCC BAA-159 / DSM 3647 / Goe1 / Go1 / JCM 11833 / OCM 88) (Methanosarcina frisia).